A 278-amino-acid chain; its full sequence is MKTKTDFLKMKEQGEPITMLTAYDYPSAKLAEEAEVDMILVGDSLGMVVLGYDSTVPVTVEDMIHHTKAVRRGAKETFIVTDMPFMSYHVSLQETMVNARRIVQESGAHALKVEGAGEVISTIQYLTNAGIPVVAHLGLTPQSVGVLGGYKVQGKDAESAKKLIEDAKKCEEAGAIALVLECVPMQLAELISEQLTIPTIGIGAGQKVDGQVLVYHDLISYGVNRVPKFVKQYTSVQEEIVRGISQYVTEVKTRQFPEEKHSFTMKEEECLVLYGGKQ.

2 residues coordinate Mg(2+): aspartate 43 and aspartate 82. 3-methyl-2-oxobutanoate is bound by residues 43–44, aspartate 82, and lysine 112; that span reads DS. Position 114 (glutamate 114) interacts with Mg(2+). The active-site Proton acceptor is glutamate 181.

Belongs to the PanB family. In terms of assembly, homodecamer; pentamer of dimers. Mg(2+) is required as a cofactor.

The protein localises to the cytoplasm. The catalysed reaction is 3-methyl-2-oxobutanoate + (6R)-5,10-methylene-5,6,7,8-tetrahydrofolate + H2O = 2-dehydropantoate + (6S)-5,6,7,8-tetrahydrofolate. It functions in the pathway cofactor biosynthesis; (R)-pantothenate biosynthesis; (R)-pantoate from 3-methyl-2-oxobutanoate: step 1/2. Functionally, catalyzes the reversible reaction in which hydroxymethyl group from 5,10-methylenetetrahydrofolate is transferred onto alpha-ketoisovalerate to form ketopantoate. In Bacillus cereus (strain B4264), this protein is 3-methyl-2-oxobutanoate hydroxymethyltransferase.